A 495-amino-acid polypeptide reads, in one-letter code: Trimethylamine methyltransferase MttB1 (495 aa).

A non-standard amino acid (pyrrolysine) is located at residue O334.

Belongs to the trimethylamine methyltransferase family. As to quaternary structure, can form a complex with MttC.

The catalysed reaction is Co(I)-[trimethylamine-specific corrinoid protein] + trimethylamine + H(+) = methyl-Co(III)-[trimethylamine-specific corrinoid protein] + dimethylamine. It functions in the pathway one-carbon metabolism; methanogenesis from trimethylamine. Functionally, catalyzes the transfer of a methyl group from trimethylamine to the corrinoid cofactor of MttC. This is Trimethylamine methyltransferase MttB1 (mttB1) from Methanosarcina mazei (strain ATCC BAA-159 / DSM 3647 / Goe1 / Go1 / JCM 11833 / OCM 88) (Methanosarcina frisia).